Reading from the N-terminus, the 240-residue chain is 1-acyl-sn-glycerol-3-phosphate acyltransferase (240 aa).

An HXXXXD motif motif is present at residues 73–78 (HQNNYD).

Belongs to the 1-acyl-sn-glycerol-3-phosphate acyltransferase family.

The protein resides in the cell inner membrane. The enzyme catalyses a 1-acyl-sn-glycero-3-phosphate + an acyl-CoA = a 1,2-diacyl-sn-glycero-3-phosphate + CoA. The protein operates within phospholipid metabolism; CDP-diacylglycerol biosynthesis; CDP-diacylglycerol from sn-glycerol 3-phosphate: step 2/3. In terms of biological role, converts lysophosphatidic acid (LPA) into phosphatidic acid by incorporating acyl moiety at the 2 position. The protein is 1-acyl-sn-glycerol-3-phosphate acyltransferase (plsC) of Haemophilus influenzae (strain ATCC 51907 / DSM 11121 / KW20 / Rd).